The following is a 245-amino-acid chain: Biosynthetic peptidoglycan transglycosylase (245 aa).

A helical membrane pass occupies residues 20–42; it reads VYAGSVFAGAWLATQLFYLVQIA.

Belongs to the glycosyltransferase 51 family.

It localises to the cell inner membrane. It carries out the reaction [GlcNAc-(1-&gt;4)-Mur2Ac(oyl-L-Ala-gamma-D-Glu-L-Lys-D-Ala-D-Ala)](n)-di-trans,octa-cis-undecaprenyl diphosphate + beta-D-GlcNAc-(1-&gt;4)-Mur2Ac(oyl-L-Ala-gamma-D-Glu-L-Lys-D-Ala-D-Ala)-di-trans,octa-cis-undecaprenyl diphosphate = [GlcNAc-(1-&gt;4)-Mur2Ac(oyl-L-Ala-gamma-D-Glu-L-Lys-D-Ala-D-Ala)](n+1)-di-trans,octa-cis-undecaprenyl diphosphate + di-trans,octa-cis-undecaprenyl diphosphate + H(+). It participates in cell wall biogenesis; peptidoglycan biosynthesis. Functionally, peptidoglycan polymerase that catalyzes glycan chain elongation from lipid-linked precursors. This is Biosynthetic peptidoglycan transglycosylase from Burkholderia ambifaria (strain ATCC BAA-244 / DSM 16087 / CCUG 44356 / LMG 19182 / AMMD) (Burkholderia cepacia (strain AMMD)).